The sequence spans 435 residues: Hydrogenobyrinate a,c-diamide synthase (435 aa).

The 184-residue stretch at 239–422 (RIGVARDASF…IHFYLPSNPQ (184 aa)) folds into the GATase cobBQ-type domain. The active-site Nucleophile is Cys-321.

Belongs to the CobB/CbiA family. The cofactor is Mg(2+).

It carries out the reaction hydrogenobyrinate + 2 L-glutamine + 2 ATP + 2 H2O = hydrogenobyrinate a,c-diamide + 2 L-glutamate + 2 ADP + 2 phosphate + 2 H(+). The protein operates within cofactor biosynthesis; adenosylcobalamin biosynthesis; cob(II)yrinate a,c-diamide from precorrin-2 (aerobic route): step 9/10. Functionally, catalyzes the ATP-dependent amidation of the two carboxylate groups at positions a and c of hydrogenobyrinate, using either L-glutamine or ammonia as the nitrogen source. This is Hydrogenobyrinate a,c-diamide synthase from Pseudomonas aeruginosa (strain ATCC 15692 / DSM 22644 / CIP 104116 / JCM 14847 / LMG 12228 / 1C / PRS 101 / PAO1).